Reading from the N-terminus, the 788-residue chain is IQ motif and ubiquitin-like domain-containing protein (788 aa).

Positions Met-1 to Asp-89 are disordered. Residues Glu-7–Gly-20 are compositionally biased toward basic and acidic residues. Residues Glu-31–Glu-54 are compositionally biased toward acidic residues. Over residues Lys-68–Val-78 the composition is skewed to basic and acidic residues. Residues Ser-80–Asp-89 show a composition bias toward polar residues. Residues Ala-127 to Pro-203 enclose the Ubiquitin-like domain. An IQ domain is found at Arg-334 to Leu-363.

In terms of assembly, component of the axonemal radial spoke 1 (RS1) complex, at least composed of spoke head proteins RSPH1, RSPH3B, RSPH9 and the cilia-specific component RSPH4A or sperm-specific component RSPH6A, spoke stalk proteins RSPH14, DNAJB13, DYDC1, ROPN1L and NME5, and the anchor protein IQUB. Does not appear to be part of radial spoke complexes 2 or 3 (RS2 or RS3). Interacts with CALM1. Interacts with DNAJB13. Interacts with DYNLL2. Interacts with NME5. Interacts with RSPH3. Interacts with RSPH9. Interacts with ZMYND10. Interacts with calmodulin; the interaction occurs in conditions of low but not high calcium. Expressed in the flagellum of sperm cells and cilia of tracheal epithelial cells (at protein level). High expression in testis, also present in brain and lung.

Its subcellular location is the cytoplasm. The protein resides in the cytoskeleton. It localises to the flagellum axoneme. The protein localises to the cell projection. It is found in the cilium. In terms of biological role, anchors the radial spoke 1 (RS1) complex to the A microtubule of outer doublet microtubules in axonemes. The triple radial spokes (RS1, RS2 and RS3) are required to modulate beating of the sperm flagellum. May play a role in inhibiting signaling via MAPK1/ERK2 and MAPK3/ERK1. Additionally, may play a role in the functioning of cilia. Not required for the functioning of tracheal or ependymal cilia. The polypeptide is IQ motif and ubiquitin-like domain-containing protein (Iqub) (Mus musculus (Mouse)).